The sequence spans 124 residues: Large ribosomal subunit protein mL52 (124 aa).

Residues 1-23 constitute a mitochondrion transit peptide; sequence MAALGMLLSTGVRRLHCGSAARA. The disordered stretch occupies residues 99-124; it reads LQEEKRKQQNALKPKGVLLQNPGPSQ.

Belongs to the mitochondrion-specific ribosomal protein mL52 family. In terms of assembly, component of the mitochondrial ribosome large subunit (39S) which comprises a 16S rRNA and about 50 distinct proteins.

Its subcellular location is the mitochondrion. This Bos taurus (Bovine) protein is Large ribosomal subunit protein mL52 (MRPL52).